Here is a 110-residue protein sequence, read N- to C-terminus: HIT-like protein CPn_0488/CP_0266/CPj0488/CpB0508 (110 aa).

The HIT domain maps to 3-110 (VFKQIIDGLI…LGGRPLGAIA (108 aa)). Residues 95 to 99 (HLHIH) carry the Histidine triad motif motif.

This chain is HIT-like protein CPn_0488/CP_0266/CPj0488/CpB0508, found in Chlamydia pneumoniae (Chlamydophila pneumoniae).